The chain runs to 261 residues: 3-hydroxyacyl-CoA dehydrogenase type-2 (261 aa).

The residue at position 2 (alanine 2) is an N-acetylalanine. Positions 20 and 41 each coordinate NAD(+). Residue lysine 53 is modified to N6-acetyllysine; alternate. N6-succinyllysine; alternate is present on lysine 53. Residue valine 65 coordinates NAD(+). Residue lysine 69 is modified to N6-acetyllysine. Residue cysteine 91 coordinates NAD(+). Residues lysine 99 and lysine 105 each carry the N6-acetyllysine modification. N6-acetyllysine; alternate is present on lysine 107. Residue lysine 107 is modified to N6-succinyllysine; alternate. Serine 155 is a substrate binding site. Residues tyrosine 168, lysine 172, phenylalanine 201, and threonine 203 each contribute to the NAD(+) site. The active-site Proton acceptor is tyrosine 168. Residue lysine 212 is modified to N6-acetyllysine; alternate. Lysine 212 carries the post-translational modification N6-succinyllysine; alternate.

Belongs to the short-chain dehydrogenases/reductases (SDR) family. Homotetramer. Component of mitochondrial ribonuclease P, a complex composed of TRMT10C/MRPP1, HSD17B10/MRPP2 and PRORP/MRPP3. Interacts with TRMT10C/MRPP1; forming the MRPP1-MRPP2 subcomplex of the mitochondrial ribonuclease P complex.

It is found in the mitochondrion. The protein localises to the mitochondrion matrix. The protein resides in the mitochondrion nucleoid. It carries out the reaction a (3S)-3-hydroxyacyl-CoA + NAD(+) = a 3-oxoacyl-CoA + NADH + H(+). The catalysed reaction is (2S,3S)-3-hydroxy-2-methylbutanoyl-CoA + NAD(+) = 2-methyl-3-oxobutanoyl-CoA + NADH + H(+). The enzyme catalyses testosterone + NAD(+) = androst-4-ene-3,17-dione + NADH + H(+). It catalyses the reaction 5alpha-androstane-3alpha,17beta-diol + NAD(+) = 17beta-hydroxy-5alpha-androstan-3-one + NADH + H(+). It carries out the reaction 17beta-estradiol + NAD(+) = estrone + NADH + H(+). The catalysed reaction is cholate + NAD(+) = 3alpha,12alpha-dihydroxy-7-oxo-5beta-cholanate + NADH + H(+). The enzyme catalyses (3S)-3-hydroxybutanoyl-CoA + NAD(+) = acetoacetyl-CoA + NADH + H(+). It catalyses the reaction (3S)-hydroxyoctanoyl-CoA + NAD(+) = 3-oxooctanoyl-CoA + NADH + H(+). It carries out the reaction (3S)-hydroxyhexadecanoyl-CoA + NAD(+) = 3-oxohexadecanoyl-CoA + NADH + H(+). The catalysed reaction is 17beta-hydroxy-5alpha-androstan-3-one + NAD(+) = 5alpha-androstan-3,17-dione + NADH + H(+). The enzyme catalyses 5alpha-pregnan-20beta-ol-3-one + NAD(+) = 5alpha-pregnane-3,20-dione + NADH + H(+). It catalyses the reaction 3alpha-hydroxy-5alpha-pregnan-20-one + NAD(+) = 5alpha-pregnane-3,20-dione + NADH + H(+). It carries out the reaction cortisone + NAD(+) = 17alpha-hydroxypregn-4-en-3,11,20-trione-21-al + NADH + H(+). The catalysed reaction is 11-dehydrocorticosterone + NAD(+) = pregn-4-ene-3,11,20,21-tetraone + NADH + H(+). The enzyme catalyses cortisol + NAD(+) = 11beta,17alpha-dihydroxypregn-4-ene-3,20,21-trione + NADH + H(+). It catalyses the reaction chenodeoxycholate + NAD(+) = 7-oxolithocholate + NADH + H(+). It carries out the reaction ursodeoxycholate + NAD(+) = 7-oxolithocholate + NADH + H(+). The catalysed reaction is 3beta,7beta-dihydroxy-5beta-cholan-24-oate + NAD(+) = 3beta-hydroxy-7-oxo-5beta-cholan-24-oate + NADH + H(+). The protein operates within amino-acid degradation; L-isoleucine degradation. It participates in lipid metabolism; fatty acid beta-oxidation. It functions in the pathway steroid metabolism. Its pathway is lipid metabolism; bile acid biosynthesis. Its function is as follows. Mitochondrial dehydrogenase involved in pathways of fatty acid, branched-chain amino acid and steroid metabolism. Acts as (S)-3-hydroxyacyl-CoA dehydrogenase in mitochondrial fatty acid beta-oxidation, a major degradation pathway of fatty acids. Catalyzes the third step in the beta-oxidation cycle, namely the reversible conversion of (S)-3-hydroxyacyl-CoA to 3-ketoacyl-CoA. Preferentially accepts straight medium- and short-chain acyl-CoA substrates with highest efficiency for (3S)-hydroxybutanoyl-CoA. Acts as 3-hydroxy-2-methylbutyryl-CoA dehydrogenase in branched-chain amino acid catabolic pathway. Catalyzes the oxidation of 3-hydroxy-2-methylbutanoyl-CoA into 2-methyl-3-oxobutanoyl-CoA, a step in isoleucine degradation pathway. Has hydroxysteroid dehydrogenase activity toward steroid hormones and bile acids. Catalyzes the oxidation of 3alpha-, 17beta-, 20beta- and 21-hydroxysteroids and 7alpha- and 7beta-hydroxy bile acids. Oxidizes allopregnanolone/brexanolone at the 3alpha-hydroxyl group, which is known to be critical for the activation of gamma-aminobutyric acid receptors (GABAARs) chloride channel. Has phospholipase C-like activity toward cardiolipin and its oxidized species. Likely oxidizes the 2'-hydroxyl in the head group of cardiolipin to form a ketone intermediate that undergoes nucleophilic attack by water and fragments into diacylglycerol, dihydroxyacetone and orthophosphate. Has higher affinity for cardiolipin with oxidized fatty acids and may degrade these species during the oxidative stress response to protect cells from apoptosis. By interacting with intracellular amyloid-beta, it may contribute to the neuronal dysfunction associated with Alzheimer disease (AD). Essential for structural and functional integrity of mitochondria. In addition to mitochondrial dehydrogenase activity, moonlights as a component of mitochondrial ribonuclease P, a complex that cleaves tRNA molecules in their 5'-ends. Together with TRMT10C/MRPP1, forms a subcomplex of the mitochondrial ribonuclease P, named MRPP1-MRPP2 subcomplex, which displays functions that are independent of the ribonuclease P activity. The MRPP1-MRPP2 subcomplex catalyzes the formation of N(1)-methylguanine and N(1)-methyladenine at position 9 (m1G9 and m1A9, respectively) in tRNAs; HSD17B10/MRPP2 acting as a non-catalytic subunit. The MRPP1-MRPP2 subcomplex also acts as a tRNA maturation platform: following 5'-end cleavage by the mitochondrial ribonuclease P complex, the MRPP1-MRPP2 subcomplex enhances the efficiency of 3'-processing catalyzed by ELAC2, retains the tRNA product after ELAC2 processing and presents the nascent tRNA to the mitochondrial CCA tRNA nucleotidyltransferase TRNT1 enzyme. Associates with mitochondrial DNA complexes at the nucleoids to initiate RNA processing and ribosome assembly. The chain is 3-hydroxyacyl-CoA dehydrogenase type-2 (Hsd17b10) from Mus musculus (Mouse).